A 452-amino-acid chain; its full sequence is Ribosomal protein uS12 methylthiotransferase RimO (452 aa).

An MTTase N-terminal domain is found at 3 to 118; the sequence is GKIGFVSLGC…VMQAIHLHLP (116 aa). 6 residues coordinate [4Fe-4S] cluster: Cys-12, Cys-48, Cys-77, Cys-149, Cys-153, and Cys-156. The Radical SAM core domain occupies 135-381; the sequence is LTPKHYAYLK…MAKAEDISIK (247 aa). The TRAM domain maps to 384–452; sequence AKKIGKRVQV…SQGHDLIAET (69 aa).

The protein belongs to the methylthiotransferase family. RimO subfamily. Requires [4Fe-4S] cluster as cofactor.

Its subcellular location is the cytoplasm. The catalysed reaction is L-aspartate(89)-[ribosomal protein uS12]-hydrogen + (sulfur carrier)-SH + AH2 + 2 S-adenosyl-L-methionine = 3-methylsulfanyl-L-aspartate(89)-[ribosomal protein uS12]-hydrogen + (sulfur carrier)-H + 5'-deoxyadenosine + L-methionine + A + S-adenosyl-L-homocysteine + 2 H(+). In terms of biological role, catalyzes the methylthiolation of an aspartic acid residue of ribosomal protein uS12. This Polynucleobacter asymbioticus (strain DSM 18221 / CIP 109841 / QLW-P1DMWA-1) (Polynucleobacter necessarius subsp. asymbioticus) protein is Ribosomal protein uS12 methylthiotransferase RimO.